Consider the following 1403-residue polypeptide: Centrosomal protein of 162 kDa (1403 aa).

The interval 20–46 (LSDDSFENSNKTPRQPNEDNKEMKKKD) is disordered. Positions 35–46 (PNEDNKEMKKKD) are enriched in basic and acidic residues. 2 positions are modified to phosphoserine: S160 and S163. Disordered stretches follow at residues 169–243 (LHRY…MLAN), 256–292 (VGLSSQEKATPKAKAPPEITDDGPAETGVPYGQSSGD), 306–348 (SLGD…ESDL), and 453–606 (NPSL…GGNR). The segment covering 178–208 (PAEDGCENESEQEELPETYSDDFEDAEDADD) has biased composition (acidic residues). Residues 210-238 (LITKDEETHPKENSESGKDSFPKQEEEKT) show a composition bias toward basic and acidic residues. Over residues 485–500 (PCKKARSTPSLPKRKP) the composition is skewed to basic residues. Basic and acidic residues-rich tracts occupy residues 526–536 (LEKKTSKDNTK) and 571–585 (PHREGSPATPKRPED). Positions 614–1124 (KRAQDAEEKW…QKERRMMLSR (511 aa)) form a coiled coil. The segment at 1126-1147 (IPRSREETAAKRLKKDPNRGHG) is disordered. Basic and acidic residues predominate over residues 1128 to 1144 (RSREETAAKRLKKDPNR). The stretch at 1174 to 1386 (EENYRLRSEL…LDVLRELHRQ (213 aa)) forms a coiled coil.

This sequence belongs to the CEP162 family. As to quaternary structure, interacts with CPNE4. Interacts with alpha-tubulin. Interacts with CEP290.

It localises to the cytoplasm. The protein localises to the cytoskeleton. Its subcellular location is the microtubule organizing center. It is found in the centrosome. The protein resides in the centriole. It localises to the spindle. The protein localises to the nucleus. Its function is as follows. Required to promote assembly of the transition zone in primary cilia. Acts by specifically recognizing and binding the axonemal microtubule. Localizes to the distal ends of centrioles before ciliogenesis and directly binds to axonemal microtubule, thereby promoting and restricting transition zone formation specifically at the cilia base. Required to mediate CEP290 association with microtubules. In Mus musculus (Mouse), this protein is Centrosomal protein of 162 kDa (Cep162).